Consider the following 493-residue polypeptide: Phenmedipham hydrolase (493 aa).

The active-site Acyl-ester intermediate is the Ser-188. Residues Glu-307 and His-402 each act as charge relay system in the active site.

This sequence belongs to the type-B carboxylesterase/lipase family. As to quaternary structure, monomer.

Functionally, may degrade the phenylcarbamate herbicides phenmedipham and desmedipham cometabolically by hydrolyzing their central carbamate linkages. Conveys resistance to the herbicide phenmedipham. The sequence is that of Phenmedipham hydrolase (pcd) from Pseudarthrobacter oxydans (Arthrobacter oxydans).